A 572-amino-acid chain; its full sequence is Protein misato homolog 1 (572 aa).

This sequence belongs to the misato family.

It is found in the mitochondrion outer membrane. Its subcellular location is the cytoplasm. In terms of biological role, involved in the regulation of mitochondrial distribution and morphology. Required for mitochondrial fusion and mitochondrial network formation. In Bos taurus (Bovine), this protein is Protein misato homolog 1 (MSTO1).